The primary structure comprises 398 residues: Signal-regulatory protein beta-1 (398 aa).

The signal sequence occupies residues 1 to 29 (MPVPASWPHLPSPFLLMTLLLGRLTGVAG). Positions 30-136 (EDELQVIQPE…SPDDVEFKSG (107 aa)) constitute an Ig-like V-type domain. At 30-371 (EDELQVIQPE…EAALAPTAPL (342 aa)) the chain is on the extracellular side. Intrachain disulfides connect cysteine 54–cysteine 120 and cysteine 169–cysteine 227. 2 Ig-like C1-type domains span residues 147–246 (PSAP…ANLS) and 253–347 (PTLE…YALE). Asparagine 244, asparagine 269, and asparagine 291 each carry an N-linked (GlcNAc...) asparagine glycan. A helical transmembrane segment spans residues 372 to 392 (LVALLLGPKLLLVVGVSAIYI). The Cytoplasmic portion of the chain corresponds to 393–398 (CWKQKA).

In terms of assembly, homodimer; disulfide-linked. Interacts with TYROBP. This interaction results in the recruitment of SYK. In terms of processing, N-glycosylated. As to expression, detected in monocytes and dendritic cells.

The protein localises to the cell membrane. In terms of biological role, immunoglobulin-like cell surface receptor involved in the negative regulation of receptor tyrosine kinase-coupled signaling processes. Also participates in the recruitment of tyrosine kinase SYK. Triggers activation of myeloid cells when associated with TYROBP. This chain is Signal-regulatory protein beta-1 (SIRPB1), found in Homo sapiens (Human).